We begin with the raw amino-acid sequence, 465 residues long: Catalase cnsD (465 aa).

His39 is an active-site residue. Tyr331 is a binding site for heme.

This sequence belongs to the catalase family. The cofactor is heme.

It functions in the pathway alkaloid biosynthesis. Its function is as follows. Catalase; part of the gene cluster that mediates the biosynthesis of communesins, a prominent class of indole alkaloids with great potential as pharmaceuticals. Communesins are biosynthesized by the coupling of tryptamine and aurantioclavine, two building blocks derived from L-tryptophan. The L-tryptophan decarboxylase cnsB converts L-tryptophan to tryptamine, whereas the tryptophan dimethylallyltransferase cnsF converts L-tryptophan to 4-dimethylallyl tryptophan which is further transformed to aurantioclavine by the aurantioclavine synthase cnsA, probably aided by the catalase cnsD. The cytochrome P450 monooxygenase cnsC catalyzes the heterodimeric coupling between the two different indole moieties, tryptamine and aurantioclavine, to construct vicinal quaternary stereocenters and yield the heptacyclic communesin scaffold. The O-methyltransferase cnsE then methylates the communesin scaffold to produce communesin K, the simplest characterized communesin that contains the heptacyclic core. The dioxygenase cnsJ converts communesin K into communesin I. Acylation to introduce the hexadienyl group at position N16 of communesin I by the acyltransferase cnsK leads to the production of communesin B. The hexadienyl group is produced by the highly reducing polyketide synthase cnsI, before being hydrolytically removed from cnsI by the serine hydrolase cnsH, converted into hexadienyl-CoA by the CoA ligase cnsG, and then transferred to communesin I by cnsK. Surprisingly, cnsK may also be a promiscuous acyltransferase that can tolerate a range of acyl groups, including acetyl-, propionyl-, and butyryl-CoA, which lead to communesins A, G and H respectively. The roles of the alpha-ketoglutarate-dependent dioxygenases cnsM and cnsP have still to be determined. This is Catalase cnsD from Penicillium expansum (Blue mold rot fungus).